The primary structure comprises 345 residues: Very-long-chain 3-oxoacyl-CoA reductase (345 aa).

The helical transmembrane segment at 26–46 threads the bilayer; that stretch reads GAAVLLATGGLFLASRVLTFV. NADP(+) is bound by residues Val71, Asp125, Asp133, Asn152, Tyr219, Lys223, Ile252, and Ser254. The active-site Proton donor is Tyr219. Lys223 functions as the Lowers pKa of active site Tyr in the catalytic mechanism.

The protein belongs to the short-chain dehydrogenases/reductases (SDR) family.

It is found in the endoplasmic reticulum membrane. The enzyme catalyses a very-long-chain (3R)-3-hydroxyacyl-CoA + NADP(+) = a very-long-chain 3-oxoacyl-CoA + NADPH + H(+). It functions in the pathway lipid metabolism; fatty acid biosynthesis. Component of the microsomal membrane bound fatty acid elongation system, which produces the 26-carbon very long-chain fatty acids (VLCFA) from palmitate. Catalyzes the reduction of the 3-ketoacyl-CoA intermediate that is formed in each cycle of fatty acid elongation. VLCFAs serve as precursors for ceramide and sphingolipids. The polypeptide is Very-long-chain 3-oxoacyl-CoA reductase (Aspergillus clavatus (strain ATCC 1007 / CBS 513.65 / DSM 816 / NCTC 3887 / NRRL 1 / QM 1276 / 107)).